The sequence spans 100 residues: Urease subunit gamma (100 aa).

The protein belongs to the urease gamma subunit family. Heterotrimer of UreA (gamma), UreB (beta) and UreC (alpha) subunits. Three heterotrimers associate to form the active enzyme.

It localises to the cytoplasm. The enzyme catalyses urea + 2 H2O + H(+) = hydrogencarbonate + 2 NH4(+). It participates in nitrogen metabolism; urea degradation; CO(2) and NH(3) from urea (urease route): step 1/1. This is Urease subunit gamma from Pseudomonas entomophila (strain L48).